A 305-amino-acid polypeptide reads, in one-letter code: Nod factor export ATP-binding protein I (305 aa).

Positions 8 to 237 (IDLVGVRKSF…HIGCNVIEIY (230 aa)) constitute an ABC transporter domain. 40 to 47 (GPNGAGKS) serves as a coordination point for ATP.

The protein belongs to the ABC transporter superfamily. Lipooligosaccharide exporter (TC 3.A.1.102) family. In terms of assembly, the complex is composed of two ATP-binding proteins (NodI) and two transmembrane proteins (NodJ).

It is found in the cell inner membrane. Functionally, part of the ABC transporter complex NodIJ involved in the export of the nodulation factors (Nod factors), the bacterial signal molecules that induce symbiosis and subsequent nodulation induction. Nod factors are LCO (lipo-chitin oligosaccharide), a modified beta-1,4-linked N-acetylglucosamine oligosaccharide. This subunit is responsible for energy coupling to the transport system. The polypeptide is Nod factor export ATP-binding protein I (Bradyrhizobium sp. (strain SNU001)).